Here is a 120-residue protein sequence, read N- to C-terminus: Ribosome-binding factor A (120 aa).

This sequence belongs to the RbfA family. In terms of assembly, monomer. Binds 30S ribosomal subunits, but not 50S ribosomal subunits or 70S ribosomes.

The protein resides in the cytoplasm. In terms of biological role, one of several proteins that assist in the late maturation steps of the functional core of the 30S ribosomal subunit. Associates with free 30S ribosomal subunits (but not with 30S subunits that are part of 70S ribosomes or polysomes). Required for efficient processing of 16S rRNA. May interact with the 5'-terminal helix region of 16S rRNA. The sequence is that of Ribosome-binding factor A from Borrelia garinii subsp. bavariensis (strain ATCC BAA-2496 / DSM 23469 / PBi) (Borreliella bavariensis).